The following is a 658-amino-acid chain: Threonine--tRNA ligase (658 aa).

Residues 1-64 (MSNTVSLQFP…GASGKVEIIT (64 aa)) enclose the TGS domain. The tract at residues 246-548 (DHRRLGREMD…LIENFAGHMP (303 aa)) is catalytic. Cys343, His394, and His525 together coordinate Zn(2+).

Belongs to the class-II aminoacyl-tRNA synthetase family. As to quaternary structure, homodimer. Requires Zn(2+) as cofactor.

The protein localises to the cytoplasm. The enzyme catalyses tRNA(Thr) + L-threonine + ATP = L-threonyl-tRNA(Thr) + AMP + diphosphate + H(+). In terms of biological role, catalyzes the attachment of threonine to tRNA(Thr) in a two-step reaction: L-threonine is first activated by ATP to form Thr-AMP and then transferred to the acceptor end of tRNA(Thr). Also edits incorrectly charged L-seryl-tRNA(Thr). The sequence is that of Threonine--tRNA ligase from Brucella melitensis biotype 1 (strain ATCC 23456 / CCUG 17765 / NCTC 10094 / 16M).